Reading from the N-terminus, the 156-residue chain is Cyanate hydratase (156 aa).

Active-site residues include Arg96, Glu99, and Ser122.

It belongs to the cyanase family.

The enzyme catalyses cyanate + hydrogencarbonate + 3 H(+) = NH4(+) + 2 CO2. Catalyzes the reaction of cyanate with bicarbonate to produce ammonia and carbon dioxide. The polypeptide is Cyanate hydratase (Escherichia coli O9:H4 (strain HS)).